The primary structure comprises 378 residues: Probable dihydroorotase-like protein (378 aa).

This sequence belongs to the metallo-dependent hydrolases superfamily. DHOase family. PyrC' subfamily.

Functionally, non-functional DHOase. The polypeptide is Probable dihydroorotase-like protein (pyrC') (Helicobacter pylori (strain J99 / ATCC 700824) (Campylobacter pylori J99)).